We begin with the raw amino-acid sequence, 93 residues long: Regulatory protein RepI (93 aa).

Its function is as follows. This protein is involved in regulating the plasmid copy-number. Increasing the level of this protein results in a higher plasmid copy-number. This chain is Regulatory protein RepI (repI), found in Escherichia coli.